A 356-amino-acid polypeptide reads, in one-letter code: Glutamine synthetase root isozyme 3 (356 aa).

Positions 19-99 (IIAEYIWIGG…VMCDCYTPAG (81 aa)) constitute a GS beta-grasp domain. Residues 106 to 356 (KRYNAAKIFS…IAETTIIWKP (251 aa)) form the GS catalytic domain.

It belongs to the glutamine synthetase family. In terms of assembly, homooctamer. As to expression, found in all the tissues examined with higher expression found in tissues of the root.

The protein resides in the cytoplasm. The enzyme catalyses L-glutamate + NH4(+) + ATP = L-glutamine + ADP + phosphate + H(+). Its function is as follows. Plays a role in the flow of nitrogen into nitrogenous organic compounds. The chain is Glutamine synthetase root isozyme 3 (GLN4) from Zea mays (Maize).